The primary structure comprises 1033 residues: RNA cytidine acetyltransferase (1033 aa).

Residues Gly285–Leu294 and Arg465 each bind ATP. An N-acetyltransferase domain is found at Val560 to Pro694. Acetyl-CoA-binding positions include Ile626–Val628, Val633–Thr639, and Arg727. The segment at Glu988 to Lys1033 is disordered. The segment covering Lys1005–Ser1026 has biased composition (basic and acidic residues).

Belongs to the RNA cytidine acetyltransferase family. NAT10 subfamily. In terms of assembly, interacts with tan1.

Its subcellular location is the nucleus. It localises to the nucleolus. The catalysed reaction is a cytidine in 18S rRNA + acetyl-CoA + ATP + H2O = an N(4)-acetylcytidine in 18S rRNA + ADP + phosphate + CoA + H(+). It carries out the reaction a cytidine in tRNA + acetyl-CoA + ATP + H2O = an N(4)-acetylcytidine in tRNA + ADP + phosphate + CoA + H(+). Its function is as follows. RNA cytidine acetyltransferase with specificity toward both 18S rRNA and tRNAs. Catalyzes the formation of N(4)-acetylcytidine (ac4C) at positions 1297 and 1815 in 18S rRNA. Required for early nucleolar cleavages of precursor rRNA at sites A0, A1 and A2 during 18S rRNA synthesis. Catalyzes the formation of ac4C in serine and leucine tRNAs. Requires the tRNA-binding adapter protein tan1 for full tRNA acetyltransferase activity but not for 18S rRNA acetylation. In Schizosaccharomyces pombe (strain 972 / ATCC 24843) (Fission yeast), this protein is RNA cytidine acetyltransferase.